We begin with the raw amino-acid sequence, 268 residues long: Glutamate racemase (268 aa).

Substrate-binding positions include 13–14 (DS) and 45–46 (YG). C77 (proton donor/acceptor) is an active-site residue. 78–79 (NT) contributes to the substrate binding site. The active-site Proton donor/acceptor is C185. Substrate is bound at residue 186–187 (TH).

It belongs to the aspartate/glutamate racemases family.

The enzyme catalyses L-glutamate = D-glutamate. Its pathway is cell wall biogenesis; peptidoglycan biosynthesis. In terms of biological role, provides the (R)-glutamate required for cell wall biosynthesis. This is Glutamate racemase from Vibrio campbellii (strain ATCC BAA-1116).